Here is a 972-residue protein sequence, read N- to C-terminus: Translation initiation factor IF-2 (972 aa).

Residues 49–63 (HLRKSHGATDGDKRK) show a composition bias toward basic and acidic residues. Disordered regions lie at residues 49–86 (HLRK…ARTI) and 100–383 (DDVA…TFQA). Over residues 105-114 (GAEQGQAQVA) the composition is skewed to low complexity. The segment covering 121–177 (ELKRREEEARREAELLEKQAQELRERQERLEREEAERRAREEAAEAERRRAEEEAAA) has biased composition (basic and acidic residues). Low complexity predominate over residues 178–209 (KRAAAAAVEAQQAAAQQAAEAQQETAGAQSAQ). A compositionally biased stretch (basic and acidic residues) spans 210–261 (DEARAAAERAAQREAAKKAEDAAREAADKTRAEQEEIRKRREAAEAEARAIR). Positions 277–286 (PPKPVEPPKP) are enriched in pro residues. Low complexity predominate over residues 298–327 (KPAGAGAARPAVKKPAGAAPATTQAPAGAG). The span at 356–369 (SSGGVDRGWRGGPK) shows a compositional bias: gly residues. The region spanning 472-641 (PRPPVVTVMG…LLQAEVLELK (170 aa)) is the tr-type G domain. Residues 481-488 (GHVDHGKT) form a G1 region. 481 to 488 (GHVDHGKT) lines the GTP pocket. A G2 region spans residues 506 to 510 (GITQH). The segment at 527–530 (DTPG) is G3. GTP is bound by residues 527–531 (DTPGH) and 581–584 (NKID). The G4 stretch occupies residues 581–584 (NKID). The segment at 617-619 (SAK) is G5.

This sequence belongs to the TRAFAC class translation factor GTPase superfamily. Classic translation factor GTPase family. IF-2 subfamily.

The protein localises to the cytoplasm. Functionally, one of the essential components for the initiation of protein synthesis. Protects formylmethionyl-tRNA from spontaneous hydrolysis and promotes its binding to the 30S ribosomal subunits. Also involved in the hydrolysis of GTP during the formation of the 70S ribosomal complex. This chain is Translation initiation factor IF-2, found in Burkholderia ambifaria (strain MC40-6).